The sequence spans 144 residues: Bacilliredoxin SSP1311 (144 aa).

Belongs to the bacilliredoxin family.

This Staphylococcus saprophyticus subsp. saprophyticus (strain ATCC 15305 / DSM 20229 / NCIMB 8711 / NCTC 7292 / S-41) protein is Bacilliredoxin SSP1311.